A 132-amino-acid polypeptide reads, in one-letter code: Holo-[acyl-carrier-protein] synthase (132 aa).

Mg(2+) contacts are provided by D8 and E62.

This sequence belongs to the P-Pant transferase superfamily. AcpS family. Mg(2+) serves as cofactor.

The protein localises to the cytoplasm. The enzyme catalyses apo-[ACP] + CoA = holo-[ACP] + adenosine 3',5'-bisphosphate + H(+). Its function is as follows. Transfers the 4'-phosphopantetheine moiety from coenzyme A to a Ser of acyl-carrier-protein. The sequence is that of Holo-[acyl-carrier-protein] synthase from Polaromonas sp. (strain JS666 / ATCC BAA-500).